The following is a 235-amino-acid chain: Large ribosomal subunit protein uL1 (235 aa).

This sequence belongs to the universal ribosomal protein uL1 family. Part of the 50S ribosomal subunit.

Its function is as follows. Binds directly to 23S rRNA. The L1 stalk is quite mobile in the ribosome, and is involved in E site tRNA release. Protein L1 is also a translational repressor protein, it controls the translation of the L11 operon by binding to its mRNA. This chain is Large ribosomal subunit protein uL1, found in Mycobacterium leprae (strain Br4923).